Here is an 89-residue protein sequence, read N- to C-terminus: Small ribosomal subunit protein uS14 (89 aa).

Belongs to the universal ribosomal protein uS14 family. Part of the 30S ribosomal subunit. Contacts proteins S3 and S10.

Binds 16S rRNA, required for the assembly of 30S particles and may also be responsible for determining the conformation of the 16S rRNA at the A site. The protein is Small ribosomal subunit protein uS14 of Flavobacterium psychrophilum (strain ATCC 49511 / DSM 21280 / CIP 103535 / JIP02/86).